Reading from the N-terminus, the 137-residue chain is uncharacterized protein (137 aa).

Residues 111 to 131 (LAVGVLVGSNLVVGSLVFALL) form a helical membrane-spanning segment.

The protein resides in the membrane. This is an uncharacterized protein from Saccharomyces cerevisiae (strain ATCC 204508 / S288c) (Baker's yeast).